Here is a 751-residue protein sequence, read N- to C-terminus: Catalase-peroxidase (751 aa).

The first 12 residues, 1-12 (MSNETKCPFSHA), serve as a signal peptide directing secretion. The tryptophyl-tyrosyl-methioninium (Trp-Tyr) (with M-267) cross-link spans 91–241 (WHSAGTYRIG…LAAVQMGLIY (151 aa)). H92 acts as the Proton acceptor in catalysis. The segment at residues 241–267 (YVNPEGPDGNPDPLAAAHDIRESFGRM) is a cross-link (tryptophyl-tyrosyl-methioninium (Tyr-Met) (with W-91)). H282 lines the heme b pocket.

Belongs to the peroxidase family. Peroxidase/catalase subfamily. Homodimer or homotetramer. Heme b serves as cofactor. Post-translationally, formation of the three residue Trp-Tyr-Met cross-link is important for the catalase, but not the peroxidase activity of the enzyme.

It catalyses the reaction H2O2 + AH2 = A + 2 H2O. The catalysed reaction is 2 H2O2 = O2 + 2 H2O. In terms of biological role, bifunctional enzyme with both catalase and broad-spectrum peroxidase activity. The protein is Catalase-peroxidase of Cupriavidus necator (strain ATCC 17699 / DSM 428 / KCTC 22496 / NCIMB 10442 / H16 / Stanier 337) (Ralstonia eutropha).